The chain runs to 69 residues: uncharacterized protein (69 aa).

The Cytoplasmic portion of the chain corresponds to 1 to 15 (MLLYIVIIVACIISK). A helical membrane pass occupies residues 16–36 (LVPNEYWAIHLFFIIMIFMVY). The Extracellular segment spans residues 37–69 (MYKKLDIHQKYQFWNYTMSGLSGHNVQVTCKCY). A glycan (N-linked (GlcNAc...) asparagine; by host) is linked at Asn-51.

It belongs to the asfivirus X69R family.

It is found in the host membrane. This is an uncharacterized protein from African swine fever virus (isolate Tick/Malawi/Lil 20-1/1983) (ASFV).